A 268-amino-acid chain; its full sequence is UPF0719 transmembrane protein aq_1349 (268 aa).

A run of 8 helical transmembrane segments spans residues 5 to 24, 37 to 59, 69 to 91, 104 to 126, 130 to 152, 173 to 195, 210 to 232, and 245 to 267; these read LIAL…LFFR, NLAL…YSVY, LYLI…IFLR, AGAG…ASFW, SFIL…LFIS, FSAS…GAIS, VLYF…FLLF, and NLSA…LAVM.

It belongs to the UPF0719 family.

Its subcellular location is the cell membrane. The protein is UPF0719 transmembrane protein aq_1349 of Aquifex aeolicus (strain VF5).